The following is an 860-amino-acid chain: Leucine--tRNA ligase (860 aa).

The 'HIGH' region signature appears at 42 to 52; sequence PYPSGRLHMGH. Positions 619 to 623 match the 'KMSKS' region motif; sequence KMSKS. Lysine 622 provides a ligand contact to ATP.

Belongs to the class-I aminoacyl-tRNA synthetase family.

The protein localises to the cytoplasm. The catalysed reaction is tRNA(Leu) + L-leucine + ATP = L-leucyl-tRNA(Leu) + AMP + diphosphate. The chain is Leucine--tRNA ligase from Shigella dysenteriae serotype 1 (strain Sd197).